A 241-amino-acid chain; its full sequence is Aquaporin Z 1 (241 aa).

Residues 23-43 (AVFAAAFPELGIGFLGVAFAF) traverse the membrane as a helical segment. The NPA 1 motif lies at 63–65 (NPA). A run of 3 helical transmembrane segments spans residues 85–105 (IVAQVLGAVVAAAALYVILTG), 129–149 (LLSALLIEIILTAFFLVVILG), and 156–176 (PVGFAPVAIGLALTLIHLISI). The NPA 2 signature appears at 184–186 (NPA). A helical transmembrane segment spans residues 204 to 224 (WLFWLAPILGGAIGAVVWKIF).

The protein belongs to the MIP/aquaporin (TC 1.A.8) family. Homotetramer.

Its subcellular location is the cell inner membrane. It catalyses the reaction H2O(in) = H2O(out). In terms of biological role, channel that permits osmotically driven movement of water in both directions. It is involved in the osmoregulation and in the maintenance of cell turgor during volume expansion in rapidly growing cells. It mediates rapid entry or exit of water in response to abrupt changes in osmolarity. This chain is Aquaporin Z 1, found in Agrobacterium fabrum (strain C58 / ATCC 33970) (Agrobacterium tumefaciens (strain C58)).